The chain runs to 393 residues: Cysteine protease ATG4B (393 aa).

The active-site Nucleophile is Cys-73. Residues Asp-278 and His-280 contribute to the active site. Residues 388–391 carry the LIR motif; that stretch reads FEIL.

It belongs to the peptidase C54 family.

The protein resides in the cytoplasm. The protein localises to the cytosol. Its subcellular location is the cytoplasmic vesicle. It localises to the autophagosome. It is found in the endoplasmic reticulum. The protein resides in the mitochondrion. It carries out the reaction [protein]-C-terminal L-amino acid-glycyl-phosphatidylethanolamide + H2O = [protein]-C-terminal L-amino acid-glycine + a 1,2-diacyl-sn-glycero-3-phosphoethanolamine. It catalyses the reaction [protein]-C-terminal L-amino acid-glycyl-phosphatidylserine + H2O = [protein]-C-terminal L-amino acid-glycine + a 1,2-diacyl-sn-glycero-3-phospho-L-serine. In terms of biological role, cysteine protease that plays a key role in autophagy by mediating both proteolytic activation and delipidation of ATG8 family proteins. Required for canonical autophagy (macroautophagy), non-canonical autophagy as well as for mitophagy. The protease activity is required for proteolytic activation of ATG8 family proteins: cleaves the C-terminal amino acid of ATG8 proteins to reveal a C-terminal glycine. Exposure of the glycine at the C-terminus is essential for ATG8 proteins conjugation to phosphatidylethanolamine (PE) and insertion to membranes, which is necessary for autophagy. Protease activity is also required to counteract formation of high-molecular weight conjugates of ATG8 proteins (ATG8ylation): acts as a deubiquitinating-like enzyme that removes ATG8 conjugated to other proteins, such as ATG3. In addition to the protease activity, also mediates delipidation of ATG8 family proteins. Catalyzes delipidation of PE-conjugated forms of ATG8 proteins during macroautophagy. Also involved in non-canonical autophagy, a parallel pathway involving conjugation of ATG8 proteins to single membranes at endolysosomal compartments, by catalyzing delipidation of ATG8 proteins conjugated to phosphatidylserine (PS). The chain is Cysteine protease ATG4B from Gallus gallus (Chicken).